Reading from the N-terminus, the 57-residue chain is MSPQTETKASVGFKAGVKDYKLTYYTPDYETKDTDILAAFRVTPQPGVPPEEAGAAV.

The propeptide occupies 1 to 2 (MS). N-acetylproline is present on proline 3. The residue at position 14 (lysine 14) is an N6,N6,N6-trimethyllysine.

Belongs to the RuBisCO large chain family. Type I subfamily. As to quaternary structure, heterohexadecamer of 8 large chains and 8 small chains.

The protein resides in the plastid. The protein localises to the chloroplast. The enzyme catalyses 2 (2R)-3-phosphoglycerate + 2 H(+) = D-ribulose 1,5-bisphosphate + CO2 + H2O. The catalysed reaction is D-ribulose 1,5-bisphosphate + O2 = 2-phosphoglycolate + (2R)-3-phosphoglycerate + 2 H(+). Its function is as follows. RuBisCO catalyzes two reactions: the carboxylation of D-ribulose 1,5-bisphosphate, the primary event in carbon dioxide fixation, as well as the oxidative fragmentation of the pentose substrate in the photorespiration process. Both reactions occur simultaneously and in competition at the same active site. This chain is Ribulose bisphosphate carboxylase large chain (rbcL), found in Camellia sinensis (Tea plant).